Consider the following 56-residue polypeptide: Protein hunchback (56 aa).

3 consecutive C2H2-type zinc fingers follow at residues 1-5 (HLRNH), 11-33 (FKCD…LKSH), and 39-56 (FRCS…SLKL).

Belongs to the hunchback C2H2-type zinc-finger protein family.

Its subcellular location is the nucleus. Gap class segmentation protein that controls development of head structures. The chain is Protein hunchback (hb) from Euscelis plebejus (Leafhopper).